Reading from the N-terminus, the 229-residue chain is uncharacterized protein (229 aa).

This is an uncharacterized protein from Bacillus subtilis (strain 168).